The following is a 968-amino-acid chain: Dynein axonemal intermediate chain 3 (968 aa).

Over residues 1 to 33 (MKDTSSKRPKSKEANKKKTKDKSNADNLPKPEE) the composition is skewed to basic and acidic residues. Disordered regions lie at residues 1–39 (MKDTSSKRPKSKEANKKKTKDKSNADNLPKPEEAAASEP) and 136–166 (KPPAEGADEQMEDEEQQEEEEEMMTKTPEPQ). Over residues 141–157 (GADEQMEDEEQQEEEEE) the composition is skewed to acidic residues. WD repeat units follow at residues 407 to 447 (ECPD…DRLQ), 480 to 536 (GHKA…VMVH), and 712 to 753 (VYSK…RQPS). Residues 830 to 857 (LHTHTDQLRVLEERVREAKQNLLAVSDR) are a coiled coil. The span at 897 to 919 (KRQSDHQKKKKETEAEQQKKKTE) shows a compositional bias: basic and acidic residues. The interval 897–930 (KRQSDHQKKKKETEAEQQKKKTELVTPPKQEEEV) is disordered.

In terms of assembly, part of the multisubunit axonemal dynein complex formed at least of two heavy chains and a number of intermediate and light chains.

The protein localises to the cytoplasm. Its function is as follows. May be involved in the regulation of cilia function. This Danio rerio (Zebrafish) protein is Dynein axonemal intermediate chain 3 (dnai3).